We begin with the raw amino-acid sequence, 425 residues long: Serine--tRNA ligase (425 aa).

231–233 contacts L-serine; sequence TAE. 262 to 264 provides a ligand contact to ATP; that stretch reads RSE. E285 provides a ligand contact to L-serine. 349–352 is an ATP binding site; sequence EISS. Residue S385 coordinates L-serine.

The protein belongs to the class-II aminoacyl-tRNA synthetase family. Type-1 seryl-tRNA synthetase subfamily. In terms of assembly, homodimer. The tRNA molecule binds across the dimer.

It localises to the cytoplasm. It carries out the reaction tRNA(Ser) + L-serine + ATP = L-seryl-tRNA(Ser) + AMP + diphosphate + H(+). The enzyme catalyses tRNA(Sec) + L-serine + ATP = L-seryl-tRNA(Sec) + AMP + diphosphate + H(+). It functions in the pathway aminoacyl-tRNA biosynthesis; selenocysteinyl-tRNA(Sec) biosynthesis; L-seryl-tRNA(Sec) from L-serine and tRNA(Sec): step 1/1. In terms of biological role, catalyzes the attachment of serine to tRNA(Ser). Is also able to aminoacylate tRNA(Sec) with serine, to form the misacylated tRNA L-seryl-tRNA(Sec), which will be further converted into selenocysteinyl-tRNA(Sec). In Exiguobacterium sibiricum (strain DSM 17290 / CCUG 55495 / CIP 109462 / JCM 13490 / 255-15), this protein is Serine--tRNA ligase.